The chain runs to 265 residues: Thymidylate synthase (265 aa).

A dUMP-binding site is contributed by R21. Position 51 (H51) interacts with (6R)-5,10-methylene-5,6,7,8-tetrahydrofolate. 127–128 contributes to the dUMP binding site; that stretch reads RR. Catalysis depends on C147, which acts as the Nucleophile. DUMP-binding positions include 167–170, N178, and 208–210; these read RSAD and HLY. D170 serves as a coordination point for (6R)-5,10-methylene-5,6,7,8-tetrahydrofolate. S264 lines the (6R)-5,10-methylene-5,6,7,8-tetrahydrofolate pocket.

This sequence belongs to the thymidylate synthase family. Bacterial-type ThyA subfamily. As to quaternary structure, homodimer.

The protein localises to the cytoplasm. The enzyme catalyses dUMP + (6R)-5,10-methylene-5,6,7,8-tetrahydrofolate = 7,8-dihydrofolate + dTMP. The protein operates within pyrimidine metabolism; dTTP biosynthesis. Functionally, catalyzes the reductive methylation of 2'-deoxyuridine-5'-monophosphate (dUMP) to 2'-deoxythymidine-5'-monophosphate (dTMP) while utilizing 5,10-methylenetetrahydrofolate (mTHF) as the methyl donor and reductant in the reaction, yielding dihydrofolate (DHF) as a by-product. This enzymatic reaction provides an intracellular de novo source of dTMP, an essential precursor for DNA biosynthesis. This chain is Thymidylate synthase, found in Neisseria gonorrhoeae.